The sequence spans 447 residues: Glycerol-3-phosphate acyltransferase ATS11, chloroplastic (447 aa).

Residues 1-21 (MFILSSSSSLPSPLSLSSSRV) are disordered. A chloroplast-targeting transit peptide spans 1 to 48 (MFILSSSSSLPSPLSLSSSRVSLPPPSSSSLNLLPLSPHFQPPNLACS). An HXXXXD motif motif is present at residues 217 to 222 (HQTEAD).

It belongs to the GPAT/DAPAT family.

It localises to the plastid. Its subcellular location is the chloroplast stroma. The enzyme catalyses a fatty acyl-[ACP] + sn-glycerol 3-phosphate = a 1-acyl-sn-glycero-3-phosphate + holo-[ACP]. It carries out the reaction sn-glycerol 3-phosphate + an acyl-CoA = a 1-acyl-sn-glycero-3-phosphate + CoA. Its pathway is phospholipid metabolism; CDP-diacylglycerol biosynthesis; CDP-diacylglycerol from sn-glycerol 3-phosphate: step 1/3. Its function is as follows. Esterifies the acyl-group from acyl-acyl carrier proteins (acyl-ACPs) to the sn-1 position of glycerol-3-phosphate. The physiological acyl donors in chloroplasts are acyl-ACPs, but acyl-CoAs are used as artificial donor for in vitro reactions. The enzyme from chilling-resistant plants discriminates against non-fluid palmitic acid and selects oleic acid whereas the enzyme from sensitive plants accepts both fatty acids. Squash is chilling-sensitive. Preferably utilizes oleoyl groups (18:1-ACP) and has lower affinity to palmitoyl (16:0-ACP) and stearoyl groups (18:0-ACP). In Cucurbita moschata (Winter crookneck squash), this protein is Glycerol-3-phosphate acyltransferase ATS11, chloroplastic.